The sequence spans 960 residues: CWF19-like protein 2 (960 aa).

4 disordered regions span residues 1–222 (MAAY…AGVV), 261–552 (EFQK…ELIL), 624–648 (AWPV…AIET), and 712–731 (AQKE…AVQE). The stretch at 13–101 (SIKSRKESKR…KKAKKEKKDE (89 aa)) forms a coiled coil. The span at 16–52 (SRKESKREERERVIQKAKEKFEKEERRKAERKARGED) shows a compositional bias: basic and acidic residues. Basic residues predominate over residues 73-96 (KTKKAKKEKKAKKSKKEKKKKAKK). Over residues 108–117 (SSEDSEDEWV) the composition is skewed to acidic residues. The span at 135–146 (EATPSSSSASNN) shows a compositional bias: low complexity. Residues 163 to 279 (SVADRRAQKE…EDAAYGERRD (117 aa)) are a coiled coil. Basic and acidic residues-rich tracts occupy residues 165–181 (ADRR…ERQK), 261–372 (EFQK…DDLS), and 404–417 (KPVD…EAGF). Positions 507–518 (SAVQDSETPTLQ) are enriched in polar residues. Residues 540–605 (SESEEEEEEE…IKDQSKRASK (66 aa)) are a coiled coil. Residues 541-552 (ESEEEEEEELIL) are compositionally biased toward acidic residues. The span at 713 to 731 (QKERAGRDEERQRNKAVQE) shows a compositional bias: basic and acidic residues.

The protein belongs to the CWF19 family.

This is CWF19-like protein 2 (cwf19l2) from Danio rerio (Zebrafish).